We begin with the raw amino-acid sequence, 242 residues long: Proteasome subunit alpha (242 aa).

Belongs to the peptidase T1A family. The 20S proteasome core is composed of 14 alpha and 14 beta subunits that assemble into four stacked heptameric rings, resulting in a barrel-shaped structure. The two inner rings, each composed of seven catalytic beta subunits, are sandwiched by two outer rings, each composed of seven alpha subunits. The catalytic chamber with the active sites is on the inside of the barrel. Has a gated structure, the ends of the cylinder being occluded by the N-termini of the alpha-subunits. Is capped at one or both ends by the proteasome regulatory ATPase, PAN.

Its subcellular location is the cytoplasm. The formation of the proteasomal ATPase PAN-20S proteasome complex, via the docking of the C-termini of PAN into the intersubunit pockets in the alpha-rings, triggers opening of the gate for substrate entry. Interconversion between the open-gate and close-gate conformations leads to a dynamic regulation of the 20S proteasome proteolysis activity. In terms of biological role, component of the proteasome core, a large protease complex with broad specificity involved in protein degradation. The protein is Proteasome subunit alpha of Sulfurisphaera tokodaii (strain DSM 16993 / JCM 10545 / NBRC 100140 / 7) (Sulfolobus tokodaii).